Consider the following 612-residue polypeptide: Protein cereblon (612 aa).

Residues 1-11 (MDDEETAEIED) are compositionally biased toward acidic residues. Disordered regions lie at residues 1–30 (MDDE…GASA), 58–133 (MELI…NPHP), and 181–211 (QERR…PYDV). The segment covering 69-81 (AADAPDAAASTGS) has biased composition (low complexity). Positions 181-190 (QERRRSRTSE) are enriched in basic and acidic residues. The region spanning 250–478 (HMLIFLHQHI…IIGSTLKDES (229 aa)) is the Lon N-terminal domain. The CULT domain occupies 477–586 (ESVFYCRYCN…LAGSSVRIGK (110 aa)). Zn(2+) is bound by residues cysteine 482, cysteine 485, cysteine 551, and cysteine 554.

The protein belongs to the CRBN family. In terms of assembly, likely a component of a DCX (DDB1-CUL4-X-box) protein ligase complex. May interact with pic/DDB1. Ubiquitinated.

The protein resides in the nucleus. It functions in the pathway protein modification; protein ubiquitination. Its function is as follows. Substrate recognition component of a DCX (DDB1-CUL4-X-box) E3 protein ligase complex that mediates the ubiquitination and subsequent proteasomal degradation of target proteins. Has an essential role in mediating growth by negatively regulating insulin signaling. It also has a role in maintaining presynaptic function in the neuromuscular junction synapses of third-instar larvae. This chain is Protein cereblon, found in Drosophila willistoni (Fruit fly).